A 515-amino-acid chain; its full sequence is Low affinity ammonium transporter (515 aa).

The Extracellular segment spans residues M1–N78. A helical membrane pass occupies residues A79–I99. Residues A100–K111 are Cytoplasmic-facing. A helical transmembrane segment spans residues F112–Y132. Residues S133–C140 are Extracellular-facing. The helical transmembrane segment at C141–G161 threads the bilayer. The Cytoplasmic segment spans residues R162–N171. A helical transmembrane segment spans residues M172–S192. Topologically, residues S193–P202 are extracellular. The chain crosses the membrane as a helical span at residues W203 to I223. At P224–R241 the chain is on the cytoplasmic side. The chain crosses the membrane as a helical span at residues I242–N262. Topologically, residues Q263–Q270 are extracellular. The helical transmembrane segment at T271–I291 threads the bilayer. At E292–A310 the chain is on the cytoplasmic side. A helical transmembrane segment spans residues F311–W331. Topologically, residues Q332–S346 are extracellular. A helical membrane pass occupies residues A347–L367. Over S368–T374 the chain is Cytoplasmic. A helical membrane pass occupies residues V375–V395. The Extracellular segment spans residues H396–T403. Residues F404–M424 form a helical membrane-spanning segment. Topologically, residues L425–G435 are cytoplasmic. The helical transmembrane segment at L436–A456 threads the bilayer. At G457–Y479 the chain is on the extracellular side. The helical transmembrane segment at M480–F500 threads the bilayer. Over M501–E515 the chain is Cytoplasmic.

Belongs to the major facilitator superfamily.

It is found in the cell membrane. In terms of biological role, low affinity ammonium transporter of the plasma membrane. May be involved in drug resistance through pumping them out of the cell. The sequence is that of Low affinity ammonium transporter from Saccharomyces cerevisiae (strain ATCC 204508 / S288c) (Baker's yeast).